We begin with the raw amino-acid sequence, 205 residues long: Urease accessory protein UreG (205 aa).

Gly12–Thr19 contributes to the GTP binding site.

This sequence belongs to the SIMIBI class G3E GTPase family. UreG subfamily. Homodimer. UreD, UreF and UreG form a complex that acts as a GTP-hydrolysis-dependent molecular chaperone, activating the urease apoprotein by helping to assemble the nickel containing metallocenter of UreC. The UreE protein probably delivers the nickel.

Its subcellular location is the cytoplasm. Its function is as follows. Facilitates the functional incorporation of the urease nickel metallocenter. This process requires GTP hydrolysis, probably effectuated by UreG. The chain is Urease accessory protein UreG from Pseudomonas savastanoi pv. phaseolicola (strain 1448A / Race 6) (Pseudomonas syringae pv. phaseolicola (strain 1448A / Race 6)).